We begin with the raw amino-acid sequence, 294 residues long: 33 kDa chaperonin (294 aa).

2 disulfide bridges follow: cysteine 235-cysteine 237 and cysteine 268-cysteine 271.

The protein belongs to the HSP33 family. Post-translationally, under oxidizing conditions two disulfide bonds are formed involving the reactive cysteines. Under reducing conditions zinc is bound to the reactive cysteines and the protein is inactive.

Its subcellular location is the cytoplasm. In terms of biological role, redox regulated molecular chaperone. Protects both thermally unfolding and oxidatively damaged proteins from irreversible aggregation. Plays an important role in the bacterial defense system toward oxidative stress. This Proteus mirabilis (strain HI4320) protein is 33 kDa chaperonin.